Consider the following 794-residue polypeptide: DNA mismatch repair protein pms1 (794 aa).

Disordered stretches follow at residues 351–384 (SQIP…SFSY) and 409–442 (GASL…TASS). Polar residues predominate over residues 352-371 (QIPDSSGDSTDQELPQSIPA). Over residues 419 to 429 (LPERLQKDSMR) the composition is skewed to basic and acidic residues. Residues 430–442 (RSSPLNEKVTASS) are compositionally biased toward polar residues.

Belongs to the DNA mismatch repair MutL/HexB family.

This protein is involved in the repair of mismatches in DNA. The protein is DNA mismatch repair protein pms1 (pms1) of Schizosaccharomyces pombe (strain 972 / ATCC 24843) (Fission yeast).